The primary structure comprises 424 residues: Tyrosine--tRNA ligase (424 aa).

Y37 contacts L-tyrosine. The short motif at 42–51 (PTADSLHLGH) is the 'HIGH' region element. 2 residues coordinate L-tyrosine: Y175 and Q179. A 'KMSKS' region motif is present at residues 235–239 (KFGKT). K238 is a binding site for ATP. The S4 RNA-binding domain occupies 357–414 (ADLQQALVNAELVPSRGQARTMIGSNAVTINGEKQSNAEYNFSDADRLFGRYTLLRRG).

This sequence belongs to the class-I aminoacyl-tRNA synthetase family. TyrS type 1 subfamily. Homodimer.

Its subcellular location is the cytoplasm. The catalysed reaction is tRNA(Tyr) + L-tyrosine + ATP = L-tyrosyl-tRNA(Tyr) + AMP + diphosphate + H(+). Catalyzes the attachment of tyrosine to tRNA(Tyr) in a two-step reaction: tyrosine is first activated by ATP to form Tyr-AMP and then transferred to the acceptor end of tRNA(Tyr). This chain is Tyrosine--tRNA ligase, found in Serratia proteamaculans (strain 568).